Here is a 91-residue protein sequence, read N- to C-terminus: Large ribosomal subunit protein bL28 (91 aa).

Belongs to the bacterial ribosomal protein bL28 family.

This chain is Large ribosomal subunit protein bL28, found in Protochlamydia amoebophila (strain UWE25).